The following is a 149-amino-acid chain: Detocs response regulatory protein DtcB (149 aa).

Residues 1–134 (MILIVEDDAH…DIEACYYDHN (134 aa)) enclose the Response regulatory domain. D53 carries the 4-aspartylphosphate modification.

Post-translationally, probably phosphorylated by DtcA.

Its function is as follows. Possible phosphate scavenger member of the two-component regulatory system Detocs that confers resistance to bacteriophage. When the system (DtcA-DtcB-DtcC) is expressed in a susceptible E.coli (strain MG1655) it confers resistance to bacteriophages T2, T4, T5, T6 and SECphi27. Detocs inhibits T5 infection leading to growth arrest but not complete cell lysis, during SECphi27 infection leads to cell lysis. Overexpression of this protein along with the intact Detocs locus cancels T5 immunity; when the phosphate-receiving Asp-53 is mutated to Ala in this protein, immunity is restored. DtcA probably autophosphorylates upon sensing viral infection, and subsequently transfers the phosphate signal to DtcC which activates it, leading to an antiviral defense; DtcB (this subunit) may scavenge phosphorylation signals from accidental activation of DtcA. The polypeptide is Detocs response regulatory protein DtcB (Vibrio alginolyticus).